The primary structure comprises 32 residues: ilv operon leader peptide (32 aa).

Its function is as follows. This protein is involved in control of the biosynthesis of isoleucine, leucine, and valine. The sequence is that of ilv operon leader peptide (ivbL) from Escherichia coli (strain K12).